Reading from the N-terminus, the 534-residue chain is Arginine--tRNA ligase (534 aa).

The 'HIGH' region motif lies at 120–130 (ANPTGFLHLGH).

This sequence belongs to the class-I aminoacyl-tRNA synthetase family. Monomer.

The protein resides in the cytoplasm. The enzyme catalyses tRNA(Arg) + L-arginine + ATP = L-arginyl-tRNA(Arg) + AMP + diphosphate. This Mesomycoplasma hyopneumoniae (strain J / ATCC 25934 / NCTC 10110) (Mycoplasma hyopneumoniae) protein is Arginine--tRNA ligase.